Consider the following 632-residue polypeptide: tRNA uridine 5-carboxymethylaminomethyl modification enzyme MnmG (632 aa).

Residues 15 to 20 (GAGHAG), Ile127, and Ser182 contribute to the FAD site. Residue 276-290 (GPRYCPSIEDKIVRF) coordinates NAD(+). Gln373 provides a ligand contact to FAD.

Belongs to the MnmG family. In terms of assembly, homodimer. Heterotetramer of two MnmE and two MnmG subunits. Requires FAD as cofactor.

Its subcellular location is the cytoplasm. Functionally, NAD-binding protein involved in the addition of a carboxymethylaminomethyl (cmnm) group at the wobble position (U34) of certain tRNAs, forming tRNA-cmnm(5)s(2)U34. This is tRNA uridine 5-carboxymethylaminomethyl modification enzyme MnmG from Streptococcus pyogenes serotype M28 (strain MGAS6180).